The chain runs to 146 residues: Anti-sigma F factor (146 aa).

Belongs to the anti-sigma-factor family.

It catalyses the reaction L-seryl-[protein] + ATP = O-phospho-L-seryl-[protein] + ADP + H(+). The enzyme catalyses L-threonyl-[protein] + ATP = O-phospho-L-threonyl-[protein] + ADP + H(+). Its function is as follows. Binds to sigma F and blocks its ability to form an RNA polymerase holoenzyme (E-sigma F). Phosphorylates SpoIIAA on a serine residue. This phosphorylation may enable SpoIIAA to act as an anti-anti-sigma factor that counteracts SpoIIAB and thus releases sigma F from inhibition. The polypeptide is Anti-sigma F factor (Bacillus anthracis (strain A0248)).